Consider the following 285-residue polypeptide: MSKGIKMHNSVMRLTIPNKKIINYAPHIVTSIILFFICQQLAQLTWKIILPVNFTDNALSSADMTSPAAPSAETALPRFTLFGLAEKTSASAPGGNLDQAPVSALRLRVTGLLASTDPSRAIAIMMKGNQQVSLGIGDNTPGGEAKIIAISPDRLIVNYRGRNEAIPLFNDPPAVGKNSAAPPARHLAQELRAQPQNILHYLNISPVMVNDKLSGYRLNPGKDPALFRQSGLRENDLAIALNGLDLRDKEQARQVLAQLPELTEITLTVERDGQKNDIYLALRDE.

Topologically, residues 1-27 are cytoplasmic; it reads MSKGIKMHNSVMRLTIPNKKIINYAPH. A helical transmembrane segment spans residues 28 to 46; it reads IVTSIILFFICQQLAQLTW. Over 47-285 the chain is Periplasmic; the sequence is KIILPVNFTD…NDIYLALRDE (239 aa).

This sequence belongs to the GSP C family.

Its subcellular location is the cell inner membrane. Involved in a type II secretion system (T2SS, formerly general secretion pathway, GSP) for the export of proteins. Required for the translocation of pullulanase. This is Type II secretion system protein C (pulC) from Klebsiella pneumoniae.